Consider the following 107-residue polypeptide: ATP synthase peripheral stalk subunit F6, mitochondrial (107 aa).

Residues 1 to 31 constitute a mitochondrion transit peptide; sequence MILQRLFRFSVIRSAVSVYLRRNIGVTAVAF. Residues Lys40, Lys45, and Lys78 each carry the N6-acetyllysine modification. N6-acetyllysine; alternate is present on residues Lys93 and Lys98. Residues Lys93 and Lys98 each carry the N6-succinyllysine; alternate modification. An N6-acetyllysine modification is found at Lys104.

This sequence belongs to the eukaryotic ATPase subunit F6 family. In terms of assembly, component of the ATP synthase complex composed at least of ATP5F1A/subunit alpha, ATP5F1B/subunit beta, ATP5MC1/subunit c (homooctomer), MT-ATP6/subunit a, MT-ATP8/subunit 8, ATP5ME/subunit e, ATP5MF/subunit f, ATP5MG/subunit g, ATP5MK/subunit k, ATP5MJ/subunit j, ATP5F1C/subunit gamma, ATP5F1D/subunit delta, ATP5F1E/subunit epsilon, ATP5PF/subunit F6, ATP5PB/subunit b, ATP5PD/subunit d, ATP5PO/subunit OSCP. ATP synthase complex consists of a soluble F(1) head domain (subunits alpha(3) and beta(3)) - the catalytic core - and a membrane F(0) domain - the membrane proton channel (subunits c, a, 8, e, f, g, k and j). These two domains are linked by a central stalk (subunits gamma, delta, and epsilon) rotating inside the F1 region and a stationary peripheral stalk (subunits F6, b, d, and OSCP).

It is found in the mitochondrion. The protein resides in the mitochondrion inner membrane. Subunit F6, of the mitochondrial membrane ATP synthase complex (F(1)F(0) ATP synthase or Complex V) that produces ATP from ADP in the presence of a proton gradient across the membrane which is generated by electron transport complexes of the respiratory chain. ATP synthase complex consist of a soluble F(1) head domain - the catalytic core - and a membrane F(1) domain - the membrane proton channel. These two domains are linked by a central stalk rotating inside the F(1) region and a stationary peripheral stalk. During catalysis, ATP synthesis in the catalytic domain of F(1) is coupled via a rotary mechanism of the central stalk subunits to proton translocation. In vivo, can only synthesize ATP although its ATP hydrolase activity can be activated artificially in vitro. Part of the complex F(0) domain. Part of the complex F(0) domain and the peripheric stalk, which acts as a stator to hold the catalytic alpha(3)beta(3) subcomplex and subunit a/ATP6 static relative to the rotary elements. This is ATP synthase peripheral stalk subunit F6, mitochondrial from Pongo abelii (Sumatran orangutan).